A 459-amino-acid chain; its full sequence is Tubulin gamma chain (459 aa).

142 to 148 is a GTP binding site; the sequence is AGGTGSG. The segment at 440–459 is disordered; sequence ADYLTKETAPTDEAEDKRAG.

It belongs to the tubulin family.

The protein resides in the cytoplasm. It localises to the cytoskeleton. Its subcellular location is the microtubule organizing center. It is found in the spindle pole body. In terms of biological role, tubulin is the major constituent of microtubules. The gamma chain is found at microtubule organizing centers (MTOC) such as the spindle poles or the centrosome, suggesting that it is involved in the minus-end nucleation of microtubule assembly. In Cochliobolus heterostrophus (strain C5 / ATCC 48332 / race O) (Southern corn leaf blight fungus), this protein is Tubulin gamma chain (TUB4).